The sequence spans 1219 residues: Pheromone-regulated membrane protein 10 (1219 aa).

Basic and acidic residues predominate over residues 1-11 (MMRTQSDEHVA). Disordered regions lie at residues 1-273 (MMRT…IERE), 303-490 (LASF…DPFT), 503-533 (HDDDEDEDNHGNFLTYDAADGSVTPTHEDYV), and 555-713 (EGNK…RPVK). Acidic residues predominate over residues 42–53 (DENDDGHDDSDE). Low complexity predominate over residues 57–68 (SVVIPTPSVVIV). The segment covering 104 to 115 (LKSPGTPTTYSP) has biased composition (polar residues). Residues 136 to 155 (GSSLSSTTLMNTLLNSSGLG) show a composition bias toward low complexity. 2 stretches are compositionally biased toward acidic residues: residues 159-171 (TESEEDDDEDEEV) and 219-231 (QEEETVASTDDDG). Basic and acidic residues-rich tracts occupy residues 259 to 273 (ADRAARADAPLIERE), 330 to 346 (DDQRDQRDSHLALRREN), and 395 to 421 (LDRRLEDIKEKRAEDKEKRAEDNEKER). The span at 422–432 (QHHHHNHHHHH) shows a compositional bias: basic residues. Residues 435-446 (ETGPNTGASSPF) are compositionally biased toward polar residues. A compositionally biased stretch (basic and acidic residues) spans 448-470 (EEEKDREAEEAEILRDQARDLVN). The span at 565–577 (TTVGDGTSTGDVS) shows a compositional bias: low complexity. A compositionally biased stretch (basic residues) spans 598 to 615 (KSKTKTTQKLGLKKKKKE). The span at 616–641 (LLKIIEDQRKEKEENKKRPKWYDKSR) shows a compositional bias: basic and acidic residues. The span at 642-652 (STSPSPGGTPA) shows a compositional bias: low complexity. Basic residues predominate over residues 653 to 673 (PHHHHHIPGLHLHHHTKGHQR). Over residues 693 to 713 (GGDKPPDRPRSLRSEALRPVK) the composition is skewed to basic and acidic residues. The next 10 helical transmembrane spans lie at 864 to 884 (PPWLCVIFFACGTGVVSPYAF), 888 to 908 (WADIPMCIILGSVVGFFQIIV), 918 to 938 (VFEVSMSILISFLARAIGTIS), 945 to 965 (FCFAAIAQGSLAIILPGYIVL), 983 to 1003 (MFYAVIYSMFLGFGITLGAVV), 1021 to 1041 (LDPLWRILFVPLYSFFIALVN), 1049 to 1069 (PSMLLISGAGYTVTYFVGANI), 1075 to 1095 (SSYLTSAIGAFTIGILGNLYS), 1100 to 1120 (GLAFAAMLPGIFVQVPSGVAS), and 1184 to 1204 (LGFTMIQVAIGITVGLFAATL).

It belongs to the ThrE exporter (TC 2.A.79) family.

It is found in the membrane. In Yarrowia lipolytica (strain CLIB 122 / E 150) (Yeast), this protein is Pheromone-regulated membrane protein 10.